We begin with the raw amino-acid sequence, 77 residues long: MERGMRLFSSLVLVLLLVTATEMGPKVAEARTCESQSHRFKGACLSDTNCASVCQTEGFPAGDCKGARRRCFCVKPC.

Residues 1–30 form the signal peptide; sequence MERGMRLFSSLVLVLLLVTATEMGPKVAEA. Disulfide bonds link cysteine 33-cysteine 77, cysteine 44-cysteine 64, cysteine 50-cysteine 71, and cysteine 54-cysteine 73.

It belongs to the DEFL family.

The protein localises to the secreted. The chain is Defensin-like protein from Nelumbo nucifera (Sacred lotus).